A 71-amino-acid chain; its full sequence is uncharacterized protein (71 aa).

A disordered region spans residues 1-71; it reads MLFETLKSLS…AFFSRPFYSE (71 aa). Over residues 7 to 33 the composition is skewed to polar residues; sequence KSLSQQNGGQFSDEQSFESPISSSFNG. The span at 35-65 shows a compositional bias: low complexity; it reads SMPFGSPSSTMSSSYKGNTNSSTKSSSAFFS.

This is an uncharacterized protein from Dictyostelium discoideum (Social amoeba).